We begin with the raw amino-acid sequence, 511 residues long: ATP synthase subunit alpha (511 aa).

169–176 contributes to the ATP binding site; it reads GDRQTGKT.

The protein belongs to the ATPase alpha/beta chains family. As to quaternary structure, F-type ATPases have 2 components, CF(1) - the catalytic core - and CF(0) - the membrane proton channel. CF(1) has five subunits: alpha(3), beta(3), gamma(1), delta(1), epsilon(1). CF(0) has three main subunits: a(1), b(2) and c(9-12). The alpha and beta chains form an alternating ring which encloses part of the gamma chain. CF(1) is attached to CF(0) by a central stalk formed by the gamma and epsilon chains, while a peripheral stalk is formed by the delta and b chains.

The protein localises to the cell inner membrane. The enzyme catalyses ATP + H2O + 4 H(+)(in) = ADP + phosphate + 5 H(+)(out). Its function is as follows. Produces ATP from ADP in the presence of a proton gradient across the membrane. The alpha chain is a regulatory subunit. The protein is ATP synthase subunit alpha of Bartonella bacilliformis (strain ATCC 35685 / KC583 / Herrer 020/F12,63).